Reading from the N-terminus, the 403-residue chain is RNA-binding motif, single-stranded-interacting protein 1 (403 aa).

A disordered region spans residues 30–56 (PAHPMAPPSPSTTSSNNNSSSSSNSGW). Over residues 40–54 (STTSSNNNSSSSSNS) the composition is skewed to low complexity. 2 RRM domains span residues 62–135 (TNLY…MAKQ) and 141–226 (TNLY…FADG). The residue at position 208 (Thr208) is a Phosphothreonine.

It is found in the nucleus. In terms of biological role, single-stranded DNA binding protein that interacts with the region upstream of the MYC gene. Binds specifically to the DNA sequence motif 5'-[AT]CT[AT][AT]T-3'. Probably has a role in DNA replication. In Rattus norvegicus (Rat), this protein is RNA-binding motif, single-stranded-interacting protein 1.